The sequence spans 675 residues: Zinc finger CCCH domain-containing protein 65 (675 aa).

The interval 294 to 320 (TFSNEAKMDPGTSIKKRSAPSKDAKAR) is disordered. Residues 307 to 320 (IKKRSAPSKDAKAR) are compositionally biased toward basic residues. Residues 314-342 (SKDAKARKRAKARIKRAQERIALGVKKLK) adopt a coiled-coil conformation. 3 C3H1-type zinc fingers span residues 350–377 (PKPI…HDTI), 384–406 (PCCY…HDLS), and 409–432 (PCNN…HKGT). Disordered regions lie at residues 487–572 (LKPS…LPLG) and 586–612 (EQKT…SHIQ). A compositionally biased stretch (low complexity) spans 490 to 504 (SSHSNQRNSSDASSS). Over residues 543–567 (KASSASKPNTDNSDSQTLKQSQQGS) the composition is skewed to polar residues. Residues 586–595 (EQKTLNREPQ) show a composition bias toward basic and acidic residues. Residues 597–612 (PASSKNLKTTPSSHIQ) show a composition bias toward polar residues.

Functionally, possesses RNA-binding and ribonuclease activities in vitro. This Arabidopsis thaliana (Mouse-ear cress) protein is Zinc finger CCCH domain-containing protein 65 (EMB1789).